Reading from the N-terminus, the 332-residue chain is Melanocortin receptor 4 (332 aa).

The Extracellular portion of the chain corresponds to Met-1–Gln-43. N-linked (GlcNAc...) asparagine glycans are attached at residues Asn-2, Asn-17, and Asn-26. Cystine bridges form between Cys-40–Cys-279 and Cys-271–Cys-277. Residues Leu-44–Ile-69 traverse the membrane as a helical segment. The Cytoplasmic segment spans residues Ala-70–Phe-81. Residues Phe-82–Leu-106 traverse the membrane as a helical segment. 3 residues coordinate Ca(2+): Glu-100, Asp-122, and Asp-126. Residues Leu-107–Asn-123 are Extracellular-facing. Residues Val-124–Val-145 traverse the membrane as a helical segment. Residues Asp-146 to Arg-165 lie on the Cytoplasmic side of the membrane. A helical transmembrane segment spans residues Val-166–Ile-186. Residues Tyr-187–Ser-191 lie on the Extracellular side of the membrane. A helical transmembrane segment spans residues Ala-192 to Met-215. At Phe-216 to Thr-248 the chain is on the cytoplasmic side. A helical membrane pass occupies residues Ile-249 to Cys-271. Over Pro-272–Phe-280 the chain is Extracellular. Residues Met-281–Leu-304 traverse the membrane as a helical segment. Over Arg-305–Tyr-332 the chain is Cytoplasmic. Residue Cys-318 is the site of S-palmitoyl cysteine attachment.

This sequence belongs to the G-protein coupled receptor 1 family. As to quaternary structure, homodimer; disulfide-linked, also forms higher order oligomers. Interacts with GNAS. Interacts with ATRNL1. Interacts with MGRN1; this interaction competes with GNAS-binding and thus inhibits agonist-induced cAMP production. Interacts with MRAP and MRAP2; these associated factors increase ligand-sensitivity and generation of cAMP.

The protein resides in the cell membrane. Its function is as follows. Hormone receptor that acts as a key component of the leptin-melanocortin pathway at the intersection of homeostatic maintenance of energetic state. Plays a role in regulating food intake: activation by a stimulating hormone such as anorexigenic alpha-melanocyte stimulating hormone (alpha-MSH) inhibits appetite, whereas binding to a natural antagonist like Agouti-related protein/AGRP promotes appetite. G-protein-coupled receptor that activates conventional Galphas signaling leading to induction of anorexogenic signaling in the hypothalamus to result in negative energy balance. Regulates the firing activity of neurons from the hypothalamus by alpha-MSH and AGRP independently of Galphas signaling by ligand-induced coupling of closure of inwardly rectifying potassium channel KCNJ13. In intestinal epithelial cells, plays a role in the inhibition of hepatic glucose production via nesfatin-1/NUCB2 leading to increased cyclic adenosine monophosphate (cAMP) levels and glucagon-like peptide 1 (GLP-1) secretion in the intestinal epithelium. The protein is Melanocortin receptor 4 (MC4R) of Sus scrofa (Pig).